The following is a 386-amino-acid chain: Citrate synthase (386 aa).

Residues His-266 and Asp-322 contribute to the active site.

Belongs to the citrate synthase family.

It catalyses the reaction oxaloacetate + acetyl-CoA + H2O = citrate + CoA + H(+). It participates in carbohydrate metabolism; tricarboxylic acid cycle; isocitrate from oxaloacetate: step 1/2. This Acidithiobacillus ferridurans protein is Citrate synthase (gltA).